Reading from the N-terminus, the 249-residue chain is Triosephosphate isomerase (249 aa).

Position 9 to 11 (9 to 11 (NWK)) interacts with substrate. Catalysis depends on histidine 95, which acts as the Electrophile. Glutamate 167 (proton acceptor) is an active-site residue. Residues glycine 173, serine 213, and 234–235 (GG) each bind substrate.

It belongs to the triosephosphate isomerase family. Homodimer.

Its subcellular location is the cytoplasm. It carries out the reaction D-glyceraldehyde 3-phosphate = dihydroxyacetone phosphate. The protein operates within carbohydrate biosynthesis; gluconeogenesis. It functions in the pathway carbohydrate degradation; glycolysis; D-glyceraldehyde 3-phosphate from glycerone phosphate: step 1/1. Involved in the gluconeogenesis. Catalyzes stereospecifically the conversion of dihydroxyacetone phosphate (DHAP) to D-glyceraldehyde-3-phosphate (G3P). This chain is Triosephosphate isomerase, found in Dictyoglomus thermophilum (strain ATCC 35947 / DSM 3960 / H-6-12).